The chain runs to 467 residues: Membrane-bound lytic murein transglycosylase F (467 aa).

The N-terminal stretch at Met1–Ala33 is a signal peptide. The interval Ile34 to Val266 is non-LT domain. The tract at residues Gln268–Asn467 is LT domain. Glu313 is an active-site residue.

The protein in the N-terminal section; belongs to the bacterial solute-binding protein 3 family. It in the C-terminal section; belongs to the transglycosylase Slt family.

The protein localises to the cell outer membrane. It carries out the reaction Exolytic cleavage of the (1-&gt;4)-beta-glycosidic linkage between N-acetylmuramic acid (MurNAc) and N-acetylglucosamine (GlcNAc) residues in peptidoglycan, from either the reducing or the non-reducing ends of the peptidoglycan chains, with concomitant formation of a 1,6-anhydrobond in the MurNAc residue.. Murein-degrading enzyme that degrades murein glycan strands and insoluble, high-molecular weight murein sacculi, with the concomitant formation of a 1,6-anhydromuramoyl product. Lytic transglycosylases (LTs) play an integral role in the metabolism of the peptidoglycan (PG) sacculus. Their lytic action creates space within the PG sacculus to allow for its expansion as well as for the insertion of various structures such as secretion systems and flagella. This Alcanivorax borkumensis (strain ATCC 700651 / DSM 11573 / NCIMB 13689 / SK2) protein is Membrane-bound lytic murein transglycosylase F.